Consider the following 342-residue polypeptide: Holliday junction branch migration complex subunit RuvB (342 aa).

The segment at 1 to 181 is large ATPase domain (RuvB-L); it reads MENRMVTPFD…FGMLCAMEFY (181 aa). Residues Leu-20, Arg-21, Gly-62, Lys-65, Thr-66, Thr-67, 128 to 130, Arg-171, Tyr-181, and Arg-218 contribute to the ATP site; that span reads EDY. Thr-66 is a Mg(2+) binding site. Residues 182–252 form a small ATPAse domain (RuvB-S) region; the sequence is TDEELMEIVV…GAKAALDLLE (71 aa). The tract at residues 255–342 is head domain (RuvB-H); that stretch reads KEGLDKIDNK…KDNQVSIFNK (88 aa). DNA contacts are provided by Arg-310 and Arg-315.

This sequence belongs to the RuvB family. Homohexamer. Forms an RuvA(8)-RuvB(12)-Holliday junction (HJ) complex. HJ DNA is sandwiched between 2 RuvA tetramers; dsDNA enters through RuvA and exits via RuvB. An RuvB hexamer assembles on each DNA strand where it exits the tetramer. Each RuvB hexamer is contacted by two RuvA subunits (via domain III) on 2 adjacent RuvB subunits; this complex drives branch migration. In the full resolvosome a probable DNA-RuvA(4)-RuvB(12)-RuvC(2) complex forms which resolves the HJ.

Its subcellular location is the cytoplasm. The catalysed reaction is ATP + H2O = ADP + phosphate + H(+). The RuvA-RuvB-RuvC complex processes Holliday junction (HJ) DNA during genetic recombination and DNA repair, while the RuvA-RuvB complex plays an important role in the rescue of blocked DNA replication forks via replication fork reversal (RFR). RuvA specifically binds to HJ cruciform DNA, conferring on it an open structure. The RuvB hexamer acts as an ATP-dependent pump, pulling dsDNA into and through the RuvAB complex. RuvB forms 2 homohexamers on either side of HJ DNA bound by 1 or 2 RuvA tetramers; 4 subunits per hexamer contact DNA at a time. Coordinated motions by a converter formed by DNA-disengaged RuvB subunits stimulates ATP hydrolysis and nucleotide exchange. Immobilization of the converter enables RuvB to convert the ATP-contained energy into a lever motion, pulling 2 nucleotides of DNA out of the RuvA tetramer per ATP hydrolyzed, thus driving DNA branch migration. The RuvB motors rotate together with the DNA substrate, which together with the progressing nucleotide cycle form the mechanistic basis for DNA recombination by continuous HJ branch migration. Branch migration allows RuvC to scan DNA until it finds its consensus sequence, where it cleaves and resolves cruciform DNA. The protein is Holliday junction branch migration complex subunit RuvB of Clostridium botulinum (strain ATCC 19397 / Type A).